Reading from the N-terminus, the 599-residue chain is Beta-(1--&gt;2)glucan export ATP-binding/permease protein NdvA (599 aa).

One can recognise an ABC transmembrane type-1 domain in the interval 21–311 (GWILAVANLL…VVNFINNVLM (291 aa)). 6 consecutive transmembrane segments (helical) span residues 22–42 (WILA…PILF), 68–88 (LLGA…LVAL), 146–166 (EHFA…YINW), 168–188 (LAIL…LVVH), 254–274 (VITR…GIYL), and 276–296 (QQGL…TLLI). An ABC transporter domain is found at 345-579 (VEFQNVSFSY…GGAFAQLARA (235 aa)). 378–385 (GATGAGKS) serves as a coordination point for ATP.

Belongs to the ABC transporter superfamily. Beta-(1--&gt;2)glucan exporter (TC 3.A.1.108.1) family. As to quaternary structure, homodimer.

It is found in the cell inner membrane. The catalysed reaction is [(1-&gt;2)-beta-D-glucosyl](n)(in) + ATP + H2O = [(1-&gt;2)-beta-D-glucosyl](n)(out) + ADP + phosphate + H(+). In terms of biological role, involved in beta-(1--&gt;2)glucan export. Transmembrane domains (TMD) form a pore in the inner membrane and the ATP-binding domain (NBD) is responsible for energy generation. The protein is Beta-(1--&gt;2)glucan export ATP-binding/permease protein NdvA of Rhodopseudomonas palustris (strain ATCC BAA-98 / CGA009).